The primary structure comprises 301 residues: Acetylglutamate kinase (301 aa).

Residues 72–73, R94, and N199 each bind substrate; that span reads GG.

The protein belongs to the acetylglutamate kinase family. ArgB subfamily.

Its subcellular location is the cytoplasm. The enzyme catalyses N-acetyl-L-glutamate + ATP = N-acetyl-L-glutamyl 5-phosphate + ADP. Its pathway is amino-acid biosynthesis; L-arginine biosynthesis; N(2)-acetyl-L-ornithine from L-glutamate: step 2/4. Functionally, catalyzes the ATP-dependent phosphorylation of N-acetyl-L-glutamate. The polypeptide is Acetylglutamate kinase (Azorhizobium caulinodans (strain ATCC 43989 / DSM 5975 / JCM 20966 / LMG 6465 / NBRC 14845 / NCIMB 13405 / ORS 571)).